The chain runs to 276 residues: F-actin-capping protein subunit beta (276 aa).

Belongs to the F-actin-capping protein beta subunit family. Component of the F-actin capping complex, composed of a heterodimer of an alpha and a beta subunit. Subunit of dynactin, a multiprotein complex part of a tripartite complex with dynein and a adapter, such as BICDL1, BICD2 or HOOK3.

It is found in the cytoplasm. The protein resides in the cytoskeleton. Functionally, F-actin-capping proteins bind in a Ca(2+)-independent manner to the fast growing ends of actin filaments (barbed end) thereby blocking the exchange of subunits at these ends. Unlike other capping proteins (such as gelsolin and severin), these proteins do not sever actin filaments. Forms, with CAPZB, the barbed end of the fast growing ends of actin filaments in the dynactin complex and stabilizes dynactin structure. The dynactin multiprotein complex activates the molecular motor dynein for ultra-processive transport along microtubules. The chain is F-actin-capping protein subunit beta (cpb) from Drosophila melanogaster (Fruit fly).